We begin with the raw amino-acid sequence, 843 residues long: MSFPPHLNRPPMGIPALPPGIPPPQFPGFPPPVPPGTPMIPVPMSIMAPAPTVLVPTVSMVGKHLGARKDHPGLKAKENDENCGPTTTVFVGNISEKASDMLIRQLLAKCGLVLSWKRVQGASGKLQAFGFCEYKEPESTLRALRLLHDLQIGEKKLLVKVDAKTKAQLDEWKAKKKASNGNARPETVTNDDEEALDEETKRRDQMIKGAIEVLIREYSSELNAPSQESDSHPRKKKKEKKEDIFRRFPVAPLIPYPLITKEDINAIEMEEDKRDLISREISKFRDTHKKLEEEKGKKEKERQEIEKERRERERERERERERREREREREREREREKEKERERERERDRDRDRTKERDRDRDRERDRDRDRERSSDRNKDRSRSREKSRDREREREREREREREREREREREREREREREREREREKDKKRDREEDEEDAYERRKLERKLREKEAAYQERLKNWEIRERKKTREYEKEAEREEERRREMAKEAKRLKEFLEDYDDDRDDPKYYRGSALQKRLRDREKEMEADERDRKREKEELEEIRQRLLAEGHPDPDAELQRMEQEAERRRQPQIKQEPESEEEEEEKQEKEEKREEPMEEEEEPEQKPCLKPTLRPISSAPSVSSASGNATPNTPGDESPCGIIIPHENSPDQQQPEEHRPKIGLSLKLGASNSPGQPNSVKRKKLPVDSVFNKFEDEDSDDVPRKRKLVPLDYGEDDKNATKGTVNTEEKRKHIKSLIEKIPTAKPELFAYPLDWSIVDSILMERRIRPWINKKIIEYIGEEEATLVDFVCSKVMAHSSPQSILDDVAMVLDEEAEVFIVKMWRLLIYETEAKKIGLVK.

The interval Met-1–Pro-30 is disordered. The span at Met-12–Pro-30 shows a compositional bias: pro residues. Residues Thr-87–Lys-164 enclose the RRM domain. Lys-135 carries the N6-acetyllysine modification. 2 disordered regions span residues Glu-171–Arg-202 and Ser-219–Asp-243. A phosphoserine mark is found at Ser-226 and Ser-229. Glycyl lysine isopeptide (Lys-Gly) (interchain with G-Cter in SUMO2) cross-links involve residues Lys-261, Lys-273, and Lys-430. Basic and acidic residues-rich tracts occupy residues Glu-280–Arg-433 and Arg-521–Arg-573. Disordered regions lie at residues Glu-280–Glu-442 and Glu-498–Lys-688. The segment at Arg-285 to Cys-644 is necessary for nuclear speckle localization. A Glycyl lysine isopeptide (Lys-Gly) (interchain with G-Cter in SUMO2) cross-link involves residue Lys-578. Position 583 is a phosphoserine (Ser-583). The span at Lys-590–Glu-599 shows a compositional bias: basic and acidic residues. Residues Ser-621–Ser-630 are compositionally biased toward low complexity. A Glycyl lysine isopeptide (Lys-Gly) (interchain with G-Cter in SUMO2) cross-link involves residue Lys-671. Positions Ala-674 to Ser-683 are enriched in polar residues. Ser-677 and Ser-683 each carry phosphoserine. Residues Lys-688 and Lys-697 each participate in a glycyl lysine isopeptide (Lys-Gly) (interchain with G-Cter in SUMO2) cross-link. Ser-703 is subject to Phosphoserine. Lys-722 is covalently cross-linked (Glycyl lysine isopeptide (Lys-Gly) (interchain with G-Cter in SUMO2)). The region spanning Pro-750–Lys-843 is the PWI domain.

In terms of assembly, interacts with LUC7L3 and SRRM1. Specifically associates with functional splicing complexes, including Sm proteins and U1, U2, U4, U5 and U6 snRNAs. Associates with exon junction complex (EJC) proteins, including APEX1, DDX39B, NCBP1, RBM8A and RNPS1. Interaction with NCBP1 is RNA-dependent. In terms of processing, sumoylated.

The protein localises to the nucleus speckle. Its subcellular location is the cytoplasm. Its function is as follows. RNA-binding protein that acts as a regulator of alternative pre-mRNA splicing. Involved in apoptotic cell death through the regulation of the apoptotic factor BCL2L1 isoform expression. Modulates the ratio of proapoptotic BCL2L1 isoform S to antiapoptotic BCL2L1 isoform L mRNA expression. When overexpressed, stimulates proapoptotic BCL2L1 isoform S 5'-splice site (5'-ss) selection, whereas its depletion caused the accumulation of antiapoptotic BCL2L1 isoform L. Promotes BCL2L1 isoform S 5'-ss usage through the 5'-CGGGCA-3' RNA sequence. Its association with LUC7L3 promotes U1 snRNP binding to a weak 5' ss in a 5'-CGGGCA-3'-dependent manner. Binds to the exonic splicing enhancer 5'-CGGGCA-3' RNA sequence located within exon 2 of the BCL2L1 pre-mRNA. Also involved in the generation of an abnormal and truncated splice form of SCN5A in heart failure. The polypeptide is RNA-binding protein 25 (RBM25) (Homo sapiens (Human)).